The following is a 248-amino-acid chain: Allergin-1 (248 aa).

The N-terminal stretch at 1–33 (MGDDDTPVCLSVASCKGVSCWLDKLLLWALTLS) is a signal peptide. Residues 34–150 (ITLRNTAVDC…DESCSSCLLS (117 aa)) are Extracellular-facing. One can recognise an Ig-like C2-type domain in the interval 54-137 (PNLNSSMSVV…SKYSQNFNFT (84 aa)). N-linked (GlcNAc...) asparagine glycosylation is present at Asn68. An intrachain disulfide couples Cys73 to Cys120. Asn135 carries an N-linked (GlcNAc...) asparagine glycan. Residues 151–171 (LLLPGVLLGLILPGLAFLIYL) traverse the membrane as a helical segment. The Cytoplasmic portion of the chain corresponds to 172–248 (KYKKGCTGKT…DDYIYSELTY (77 aa)). 2 short sequence motifs (ITIM motif) span residues 216–221 (IHYTTP) and 241–246 (YIYSEL). Residues Tyr218 and Tyr243 each carry the phosphotyrosine modification.

In terms of assembly, monomer. Interacts (tyrosine-phosphorylated) with PTPN6, PTPN11 and INPP5D. In terms of processing, N-glycosylated. In terms of tissue distribution, mast cell-specific. Expressed in primary and transformed mast cells.

Its subcellular location is the cell membrane. Its function is as follows. Immunoglobulin-like receptor which plays an inhibitory role in degranulation of mast cells. Negatively regulates IgE-mediated mast cell activation and suppresses the type I immediate hypersensitivity reaction. The sequence is that of Allergin-1 (Milr1) from Rattus norvegicus (Rat).